A 177-amino-acid polypeptide reads, in one-letter code: Small ribosomal subunit protein bS16 (177 aa).

The interval 80 to 177 (GIIAMPANGS…AAEAPKEEAK (98 aa)) is disordered. The segment covering 107–122 (AAPAAAPKAEAAPAAE) has biased composition (low complexity).

It belongs to the bacterial ribosomal protein bS16 family.

This chain is Small ribosomal subunit protein bS16, found in Pelagibacter ubique (strain HTCC1062).